Reading from the N-terminus, the 212-residue chain is High frequency lysogenization protein HflD homolog (212 aa).

Residues 92–128 adopt a coiled-coil conformation; the sequence is LIALERKLNAKSAALDELGKRIGQLERQLEHFELLSE.

This sequence belongs to the HflD family.

The protein localises to the cytoplasm. The protein resides in the cell inner membrane. This chain is High frequency lysogenization protein HflD homolog, found in Pectobacterium atrosepticum (strain SCRI 1043 / ATCC BAA-672) (Erwinia carotovora subsp. atroseptica).